The sequence spans 204 residues: High frequency lysogenization protein HflD homolog (204 aa).

This sequence belongs to the HflD family.

The protein resides in the cytoplasm. Its subcellular location is the cell inner membrane. The chain is High frequency lysogenization protein HflD homolog from Ruthia magnifica subsp. Calyptogena magnifica.